We begin with the raw amino-acid sequence, 394 residues long: Probable malate--CoA ligase subunit beta (394 aa).

Residues 9-244 enclose the ATP-grasp domain; it reads KELLARHGVH…KSQEDPRETF (236 aa). Positions 46, 99, 102, and 107 each coordinate ATP. 2 residues coordinate Mg(2+): Asn199 and Asp213.

This sequence belongs to the succinate/malate CoA ligase beta subunit family. In terms of assembly, heterotetramer of two alpha and two beta subunits. It depends on Mg(2+) as a cofactor.

The enzyme catalyses (S)-malate + ATP + CoA = (S)-malyl-CoA + ADP + phosphate. It functions in the pathway one-carbon metabolism; formaldehyde assimilation via serine pathway. This is Probable malate--CoA ligase subunit beta (mtkA) from Mesorhizobium japonicum (strain LMG 29417 / CECT 9101 / MAFF 303099) (Mesorhizobium loti (strain MAFF 303099)).